Reading from the N-terminus, the 282-residue chain is Bis(5'-nucleosyl)-tetraphosphatase, symmetrical (282 aa).

It belongs to the Ap4A hydrolase family.

The enzyme catalyses P(1),P(4)-bis(5'-adenosyl) tetraphosphate + H2O = 2 ADP + 2 H(+). Functionally, hydrolyzes diadenosine 5',5'''-P1,P4-tetraphosphate to yield ADP. This chain is Bis(5'-nucleosyl)-tetraphosphatase, symmetrical, found in Enterobacter sp. (strain 638).